We begin with the raw amino-acid sequence, 301 residues long: UDP-N-acetylenolpyruvoylglucosamine reductase (301 aa).

The 165-residue stretch at 30–194 (VGGEADYLVF…LSVKFALAPG (165 aa)) folds into the FAD-binding PCMH-type domain. Arg-173 is a catalytic residue. The active-site Proton donor is Ser-223. Glu-293 is an active-site residue.

This sequence belongs to the MurB family. Requires FAD as cofactor.

It is found in the cytoplasm. The enzyme catalyses UDP-N-acetyl-alpha-D-muramate + NADP(+) = UDP-N-acetyl-3-O-(1-carboxyvinyl)-alpha-D-glucosamine + NADPH + H(+). It participates in cell wall biogenesis; peptidoglycan biosynthesis. Its function is as follows. Cell wall formation. In Streptococcus pneumoniae (strain 70585), this protein is UDP-N-acetylenolpyruvoylglucosamine reductase.